Consider the following 183-residue polypeptide: Bifunctional protein PyrR (183 aa).

The PRPP-binding signature appears at V102–T114.

This sequence belongs to the purine/pyrimidine phosphoribosyltransferase family. PyrR subfamily. As to quaternary structure, homodimer and homohexamer; in equilibrium.

It carries out the reaction UMP + diphosphate = 5-phospho-alpha-D-ribose 1-diphosphate + uracil. Regulates transcriptional attenuation of the pyrimidine nucleotide (pyr) operon by binding in a uridine-dependent manner to specific sites on pyr mRNA. This disrupts an antiterminator hairpin in the RNA and favors formation of a downstream transcription terminator, leading to a reduced expression of downstream genes. In terms of biological role, also displays a weak uracil phosphoribosyltransferase activity which is not physiologically significant. The polypeptide is Bifunctional protein PyrR (Listeria monocytogenes serotype 4a (strain HCC23)).